A 489-amino-acid polypeptide reads, in one-letter code: Diaminopimelate decarboxylase 2, chloroplastic (489 aa).

A chloroplast-targeting transit peptide spans 1–50 (MAAVTQFLSQPSSIRGTLNQYQLNQTSLSRIPFLSLKSTLKPLKRLSVKA). The residue at position 51 (Ala-51) is an N-acetylalanine. N6-(pyridoxal phosphate)lysine is present on Lys-130. Residues Gly-309 and 345 to 348 (EPGR) contribute to the pyridoxal 5'-phosphate site. Substrate-binding residues include Arg-348, Arg-384, and Tyr-388. Cys-416 acts as the Proton donor in catalysis. 2 residues coordinate substrate: Glu-417 and Tyr-445. Tyr-445 contributes to the pyridoxal 5'-phosphate binding site.

It belongs to the Orn/Lys/Arg decarboxylase class-II family. LysA subfamily. As to quaternary structure, homodimer. Requires pyridoxal 5'-phosphate as cofactor.

The protein localises to the plastid. It localises to the chloroplast. It carries out the reaction meso-2,6-diaminopimelate + H(+) = L-lysine + CO2. The protein operates within amino-acid biosynthesis; L-lysine biosynthesis via DAP pathway; L-lysine from DL-2,6-diaminopimelate: step 1/1. In terms of biological role, specifically catalyzes the decarboxylation of meso-diaminopimelate (meso-DAP) to L-lysine. The sequence is that of Diaminopimelate decarboxylase 2, chloroplastic (LYSA2) from Arabidopsis thaliana (Mouse-ear cress).